A 456-amino-acid chain; its full sequence is Membrane-bound lytic murein transglycosylase F (456 aa).

A signal peptide spans 1–22 (MKTWPSRAVSLLLLALALPVGC). Residues 23–267 (SEPPPPVRDP…ALDETWFGRF (245 aa)) form a non-LT domain region. Residues 268–456 (GDYDYVDVAR…YRALLAAQDL (189 aa)) form an LT domain region. Glutamate 314 is an active-site residue.

The protein in the N-terminal section; belongs to the bacterial solute-binding protein 3 family. This sequence in the C-terminal section; belongs to the transglycosylase Slt family.

Its subcellular location is the cell outer membrane. The catalysed reaction is Exolytic cleavage of the (1-&gt;4)-beta-glycosidic linkage between N-acetylmuramic acid (MurNAc) and N-acetylglucosamine (GlcNAc) residues in peptidoglycan, from either the reducing or the non-reducing ends of the peptidoglycan chains, with concomitant formation of a 1,6-anhydrobond in the MurNAc residue.. Murein-degrading enzyme that degrades murein glycan strands and insoluble, high-molecular weight murein sacculi, with the concomitant formation of a 1,6-anhydromuramoyl product. Lytic transglycosylases (LTs) play an integral role in the metabolism of the peptidoglycan (PG) sacculus. Their lytic action creates space within the PG sacculus to allow for its expansion as well as for the insertion of various structures such as secretion systems and flagella. The protein is Membrane-bound lytic murein transglycosylase F of Maricaulis maris (strain MCS10) (Caulobacter maris).